The following is a 471-amino-acid chain: Glutamyl-tRNA(Gln) amidotransferase subunit A, mitochondrial (471 aa).

Catalysis depends on charge relay system residues Lys64 and Ser141. The active-site Acyl-ester intermediate is Ser165.

It belongs to the amidase family. GatA subfamily. Subunit of the heterotrimeric GatCAB amidotransferase (AdT) complex, composed of A, B and C subunits.

It localises to the mitochondrion. The catalysed reaction is L-glutamyl-tRNA(Gln) + L-glutamine + ATP + H2O = L-glutaminyl-tRNA(Gln) + L-glutamate + ADP + phosphate + H(+). In terms of biological role, allows the formation of correctly charged Gln-tRNA(Gln) through the transamidation of misacylated Glu-tRNA(Gln) in the mitochondria. The reaction takes place in the presence of glutamine and ATP through an activated gamma-phospho-Glu-tRNA(Gln). The chain is Glutamyl-tRNA(Gln) amidotransferase subunit A, mitochondrial from Schizosaccharomyces pombe (strain 972 / ATCC 24843) (Fission yeast).